Reading from the N-terminus, the 387-residue chain is Leucine aminopeptidase 1 (387 aa).

The signal sequence occupies residues 1 to 18 (MKIRAALALSATASGVLA). A propeptide spanning residues 19–87 (AVVPQQALLN…YPTLHQASNV (69 aa)) is cleaved from the precursor. N-linked (GlcNAc...) asparagine glycosylation occurs at asparagine 179. Zn(2+)-binding residues include histidine 187, aspartate 206, glutamate 245, and aspartate 272. Cysteines 321 and 325 form a disulfide. Histidine 354 serves as a coordination point for Zn(2+).

The protein belongs to the peptidase M28 family. M28E subfamily. Monomer. Zn(2+) is required as a cofactor.

The protein localises to the secreted. Functionally, extracellular aminopeptidase that allows assimilation of proteinaceous substrates. This Aspergillus oryzae (strain ATCC 42149 / RIB 40) (Yellow koji mold) protein is Leucine aminopeptidase 1 (lap1).